The primary structure comprises 109 residues: Large ribosomal subunit protein uL22 (109 aa).

It belongs to the universal ribosomal protein uL22 family. As to quaternary structure, part of the 50S ribosomal subunit.

This protein binds specifically to 23S rRNA; its binding is stimulated by other ribosomal proteins, e.g. L4, L17, and L20. It is important during the early stages of 50S assembly. It makes multiple contacts with different domains of the 23S rRNA in the assembled 50S subunit and ribosome. In terms of biological role, the globular domain of the protein is located near the polypeptide exit tunnel on the outside of the subunit, while an extended beta-hairpin is found that lines the wall of the exit tunnel in the center of the 70S ribosome. This is Large ribosomal subunit protein uL22 from Aromatoleum aromaticum (strain DSM 19018 / LMG 30748 / EbN1) (Azoarcus sp. (strain EbN1)).